A 432-amino-acid polypeptide reads, in one-letter code: Gamma-glutamyl phosphate reductase (432 aa).

The protein belongs to the gamma-glutamyl phosphate reductase family.

The protein resides in the cytoplasm. It catalyses the reaction L-glutamate 5-semialdehyde + phosphate + NADP(+) = L-glutamyl 5-phosphate + NADPH + H(+). The protein operates within amino-acid biosynthesis; L-proline biosynthesis; L-glutamate 5-semialdehyde from L-glutamate: step 2/2. In terms of biological role, catalyzes the NADPH-dependent reduction of L-glutamate 5-phosphate into L-glutamate 5-semialdehyde and phosphate. The product spontaneously undergoes cyclization to form 1-pyrroline-5-carboxylate. The protein is Gamma-glutamyl phosphate reductase of Deinococcus radiodurans (strain ATCC 13939 / DSM 20539 / JCM 16871 / CCUG 27074 / LMG 4051 / NBRC 15346 / NCIMB 9279 / VKM B-1422 / R1).